The following is a 327-amino-acid chain: Eukaryotic translation initiation factor 3 subunit I (327 aa).

5 WD repeats span residues 8–49 (GHER…GSYD), 51–89 (HNGAVWDIDVSWDTSKCVTASGDLTVKIWDAELGSCIYT), 188–227 (VHRYSIQDLQLSPRGDFLISASRDKTAALLDVNDLKKLKQ), 229–268 (KSERPVNSACIAPNRDHICLGGGEDAMQVTQTAVSAGHFE), and 285–324 (GHFGPINTMAWHPSGSIIATGGEDGYVRIQEFDEDYLGFT).

Belongs to the eIF-3 subunit I family. In terms of assembly, component of the eukaryotic translation initiation factor 3 (eIF-3) complex.

It is found in the cytoplasm. Component of the eukaryotic translation initiation factor 3 (eIF-3) complex, which is involved in protein synthesis of a specialized repertoire of mRNAs and, together with other initiation factors, stimulates binding of mRNA and methionyl-tRNAi to the 40S ribosome. The eIF-3 complex specifically targets and initiates translation of a subset of mRNAs involved in cell proliferation. This is Eukaryotic translation initiation factor 3 subunit I from Caenorhabditis briggsae.